We begin with the raw amino-acid sequence, 104 residues long: uncharacterized protein (104 aa).

This is an uncharacterized protein from Treponema pallidum (strain Nichols).